Reading from the N-terminus, the 824-residue chain is Probable ion channel POLLUX (824 aa).

Positions 45-54 (DGDDSSNLPT) are enriched in low complexity. Residues 45-70 (DGDDSSNLPTVPNPEEKPVPVPSQSP) are disordered. A run of 4 helical transmembrane segments spans residues 81–101 (FSLT…VMFL), 135–155 (AVVF…YMYL), 198–218 (LALL…LYAV), and 250–270 (IVSV…LGLI). 2 consecutive RCK N-terminal domains span residues 291 to 432 (SNHI…ETVV) and 550 to 699 (PEKI…DKSI). Positions 325-346 (LAERDKEEMETDIAKFEFDLMG) form a coiled coil.

This sequence belongs to the castor/pollux (TC 1.A.1.23) family.

The protein resides in the nucleus membrane. This is Probable ion channel POLLUX from Arabidopsis thaliana (Mouse-ear cress).